Consider the following 123-residue polypeptide: Angiogenin-2 (123 aa).

The residue at position 1 (Gln1) is a Pyrrolidone carboxylic acid. The active-site Proton acceptor is the His12. Intrachain disulfides connect Cys25–Cys80, Cys38–Cys91, and Cys56–Cys106. Residues 30–34 (ERRNM) carry the Nucleolar localization signal motif. Residue Asn33 is glycosylated (N-linked (GlcNAc...) asparagine). Residues Asp40, His82, and His113 each coordinate Zn(2+). The active-site Proton donor is His113.

Belongs to the pancreatic ribonuclease family. Serum and milk.

The protein localises to the cytoplasmic vesicle. Its subcellular location is the secretory vesicle lumen. The protein resides in the secreted. It is found in the nucleus. It localises to the nucleolus. With respect to regulation, divalent metal ions, such as Cu2+ and Zn2+, may inhibit the ribonucleolytic activity. Functionally, binds tightly to placental ribonuclease inhibitor and has very low ribonuclease activity. Has potent angiogenic activity. Angiogenin induces vascularization of normal and malignant tissues. Abolishes protein synthesis by specifically hydrolyzing cellular tRNAs. The protein is Angiogenin-2 of Bos taurus (Bovine).